A 117-amino-acid chain; its full sequence is Big defensin (117 aa).

The signal sequence occupies residues 1-23; that stretch reads MKGNIGIAVFYMLLLLLPTDSIG. Positions 26 to 36 are excised as a propeptide; sequence MEEEQEKLFRQ. 3 disulfides stabilise this stretch: cysteine 83/cysteine 113, cysteine 90/cysteine 108, and cysteine 94/cysteine 114.

Belongs to the big defensin family. As to quaternary structure, interacts with intracellular coagulation inhibitor 1/LICI-1. Expressed in all tissues examined, including hemocytes, heart, hepatopancreas, stomach, intestine and skeletal muscle.

It is found in the secreted. Functionally, significantly inhibits the growth of Gram-negative and Gram-positive bacteria and fungi in vitro. This is Big defensin from Tachypleus tridentatus (Japanese horseshoe crab).